Here is a 642-residue protein sequence, read N- to C-terminus: Polyglycine hydrolase (642 aa).

The signal sequence occupies residues 1 to 23; the sequence is MYTSRLLLSNLASCLSLATLVAS. N-linked (GlcNAc...) asparagine glycans are attached at residues asparagine 37, asparagine 100, asparagine 159, and asparagine 341. A disulfide bridge links cysteine 149 with cysteine 183. The active site involves serine 370. N-linked (GlcNAc...) asparagine glycosylation is found at asparagine 390, asparagine 407, asparagine 444, asparagine 487, and asparagine 494.

The protein belongs to the peptidase S12 family.

It is found in the secreted. It catalyses the reaction a glycyl-glycyl-[protein] + H2O = N-terminal glycyl-[protein] + [protein]-C-terminal glycine. With respect to regulation, not inhibited by phenylmethylsulfonyl fluoride (PMSF; serine peptidase class S1 inhibitor), clavulanic acid (beta-lactamase inhibitor) or ampicillin (penicillin-binding protein (PBP) inhibitor). Functionally, serine-type endopeptidase that cleaves Gly-Gly bonds in the polyglycine linker of host plant class IV chitinases to disrupt their chitin-binding, and thereby plays a role in lowering the defense responses of the host to the fungus. Degrades Z.mays Endochitinase A (CHIA). Degrades Z.mays Endochitinase B (CHIB). Has no activity on Z.mays CHIA following CHIA cleavage by fungalysin. This is Polyglycine hydrolase from Epicoccum sorghinum (Endophyte fungus).